Here is an 88-residue protein sequence, read N- to C-terminus: uncharacterized protein (88 aa).

3 helical membrane passes run 3-23 (VFIL…CSVA), 33-53 (VAPG…AFTA), and 61-81 (FIGG…PFFF).

The protein resides in the cell membrane. This is an uncharacterized protein from Bacillus subtilis (strain 168).